Here is a 105-residue protein sequence, read N- to C-terminus: Protamine-2 (105 aa).

Residues methionine 1–histidine 74 are disordered. 3 positions are modified to phosphoserine: serine 8, serine 10, and serine 33. Over residues serine 33–arginine 42 the composition is skewed to basic and acidic residues. The segment covering threonine 43–histidine 74 has biased composition (basic residues).

It belongs to the protamine P2 family. As to quaternary structure, interacts with TDRP. Post-translationally, proteolytic processing into mature chains is required for histone eviction during spermatogenesis. Transition proteins (TNP1 and TNP2) are required for processing. As to expression, testis.

The protein localises to the nucleus. The protein resides in the chromosome. Its function is as follows. Protamines substitute for histones in the chromatin of sperm during the haploid phase of spermatogenesis. They compact sperm DNA into a highly condensed, stable and inactive complex. In Rattus fuscipes (Bush rat), this protein is Protamine-2 (Prm2).